The following is a 533-amino-acid chain: Probable bifunctional tRNA threonylcarbamoyladenosine biosynthesis protein (533 aa).

Residues 1 to 328 (MRILGIEGTA…FRPDAVTVTW (328 aa)) are kae1. Fe cation is bound by residues His112 and His116. L-threonylcarbamoyladenylate is bound by residues 133–137 (NASGA), Asp165, Gly178, Glu182, and Asn261. Asp289 lines the Fe cation pocket. The Protein kinase domain occupies 339–533 (PATLDKTPVR…RDIESRGRYH (195 aa)). Residues 347–354 (VRGAEAIV) and Lys363 contribute to the ATP site. Asp452 acts as the Proton acceptor; for kinase activity in catalysis.

The protein in the N-terminal section; belongs to the KAE1 / TsaD family. In the C-terminal section; belongs to the protein kinase superfamily. Tyr protein kinase family. BUD32 subfamily. As to quaternary structure, component of the KEOPS complex that consists of Kae1, Bud32, Cgi121 and Pcc1; the whole complex dimerizes. Fe(2+) serves as cofactor.

It is found in the cytoplasm. It carries out the reaction L-seryl-[protein] + ATP = O-phospho-L-seryl-[protein] + ADP + H(+). The catalysed reaction is L-threonyl-[protein] + ATP = O-phospho-L-threonyl-[protein] + ADP + H(+). The enzyme catalyses L-threonylcarbamoyladenylate + adenosine(37) in tRNA = N(6)-L-threonylcarbamoyladenosine(37) in tRNA + AMP + H(+). Its function is as follows. Required for the formation of a threonylcarbamoyl group on adenosine at position 37 (t(6)A37) in tRNAs that read codons beginning with adenine. Is a component of the KEOPS complex that is probably involved in the transfer of the threonylcarbamoyl moiety of threonylcarbamoyl-AMP (TC-AMP) to the N6 group of A37. The Kae1 domain likely plays a direct catalytic role in this reaction. The Bud32 domain probably displays kinase activity that regulates Kae1 function. The polypeptide is Probable bifunctional tRNA threonylcarbamoyladenosine biosynthesis protein (Haloquadratum walsbyi (strain DSM 16790 / HBSQ001)).